A 29-amino-acid chain; its full sequence is Cytochrome b6-f complex subunit 8 (29 aa).

A helical membrane pass occupies residues Ile3–Val23.

This sequence belongs to the PetN family. In terms of assembly, the 4 large subunits of the cytochrome b6-f complex are cytochrome b6, subunit IV (17 kDa polypeptide, PetD), cytochrome f and the Rieske protein, while the 4 small subunits are PetG, PetL, PetM and PetN. The complex functions as a dimer.

It localises to the plastid. Its subcellular location is the chloroplast thylakoid membrane. In terms of biological role, component of the cytochrome b6-f complex, which mediates electron transfer between photosystem II (PSII) and photosystem I (PSI), cyclic electron flow around PSI, and state transitions. The chain is Cytochrome b6-f complex subunit 8 from Drimys granadensis.